A 299-amino-acid chain; its full sequence is MVSKLSLYLVTPPGFQPGKIEAQLIGDRYQIKLLDYGQKFLAFLEANKEQIDCLVVVQGKENQDYFECLTQSGILLPCVFLGPTTACEISQEDVSEQLYHSAEKYLDFANLENLSLTIDQAIAQFLHLAPSCALSDKPQDPHHSDPDKTHQAFLLLQQRRLAEKLRERLGYLGVYYKRNPKYFYRSLSPEEQQEFREQFVADYRDIVLSYFSGDLPTNQAIDQFVNQAFFADVSVSYILETHMKLMDEFAQQLKLEGRSEEILLDYRLTLIDIVAHLCEMYRRSIPREDLPFELLFRID.

The 169-residue stretch at 1-169 (MVSKLSLYLV…RLAEKLRERL (169 aa)) folds into the KaiA N-terminal domain. A psR domain, binds oxidized quinones region spans residues 3-135 (SKLSLYLVTP…LHLAPSCALS (133 aa)). The interval 170-178 (GYLGVYYKR) is flexible linker. A KaiA C-terminal domain is found at 179-287 (NPKYFYRSLS…CEMYRRSIPR (109 aa)).

In terms of assembly, homodimer. The KaiABC complex composition changes during the circadian cycle to control KaiC phosphorylation. Complexes KaiC(6), KaiA(2-4):KaiC(6), KaiB(6):KaiC(6) and KaiC(6):KaiB(6):KaiA(12) are among the most important forms, many form cooperatively. KaiA and CikA bind to the same region of the KaiB(fs) form and therefore compete.

Its function is as follows. Key component of the KaiABC oscillator complex, which constitutes the main circadian regulator in cyanobacteria. Complex composition changes during the circadian cycle to control KaiC phosphorylation. KaiA stimulates KaiC autophosphorylation, while KaiB sequesters KaiA, leading to KaiC autodephosphorylation. KaiA binding to the KaiC CII domain during the subjective day yields KaiA(2-4):KaiC(6) complexes which stimulate KaiC autophosphorylation. Phospho-Ser-431 KaiC accumulation triggers binding of KaiB during the subjective night to form the KaiB(6):KaiC(6) complex, leading to changes in the output regulators CikA and SasA. KaiB(6):KaiC(6) formation exposes a site for KaiA binding on KaiB that sequesters KaiA from KaiC's CII domain, making the KaiC(6):KaiB(6):KaiA(12) complex resulting in KaiC autodephosphorylation. Complete dephosphorylation of KaiC leads to dissociation of KaiA(2):KaiB(1), completing 1 cycle of the Kai oscillator. Functionally, binds oxidized quinones via the N-terminal PsR domain, allowing it to sense redox changes and possibly mediate clock input. The polypeptide is Circadian clock oscillator protein KaiA (Picosynechococcus sp. (strain ATCC 27264 / PCC 7002 / PR-6) (Agmenellum quadruplicatum)).